The following is a 300-amino-acid chain: DPGSQGVGAEAENTGERTGGEAEAPAEGENGERSGGDAALGGESEGKAENESEGDIPAERRGDDEDEGEIQAEGGEVKGDEDEGEIQAGEGGEVEGDEDEGEIQAGEGGEVEGDEDEGEIQAGEGGEVEGDEDEGEIQAGEGGEVKDDEGEIQAGEAGEVEGEDGEVEGGEDEGEIQAGEGGEGETGEQELNAEIQGEAKDDEEGVDGEGGGDGGDSEDEEEEDEEEDEEEEEEEEEEEEEENEQPLSLEWPETRRKQAIYLFLLPIVFPLWLTVPDVRRLEAKKFFVITFLGSILWIAM.

The tract at residues 1–251 (DPGSQGVGAE…ENEQPLSLEW (251 aa)) is disordered. Acidic residues-rich tracts occupy residues 92–102 (GEVEGDEDEGE), 109–119 (GEVEGDEDEGE), 126–136 (GEVEGDEDEGE), 158–175 (GEVE…DEGE), and 215–244 (GDSE…EENE). Residues 259–275 (AIYLFLLPIVFPLWLTV) form a helical membrane-spanning segment.

The protein belongs to the Ca(2+):cation antiporter (CaCA) (TC 2.A.19) family. SLC24A subfamily. The uncleaved signal sequence is required for efficient membrane targeting and proper membrane integration and topology.

The protein resides in the cell membrane. It carries out the reaction Ca(2+)(out) + K(+)(out) + 4 Na(+)(in) = Ca(2+)(in) + K(+)(in) + 4 Na(+)(out). In terms of biological role, calcium, potassium:sodium antiporter that transports 1 Ca(2+) and 1 K(+) in exchange for 4 Na(+). Critical component of the visual transduction cascade, controlling the calcium concentration of outer segments during light and darkness. Light causes a rapid lowering of cytosolic free calcium in the outer segment of both retinal rod and cone photoreceptors and the light-induced lowering of calcium is caused by extrusion via this protein which plays a key role in the process of light adaptation. The protein is Sodium/potassium/calcium exchanger 1 (SLC24A1) of Bison bison (American bison).